A 219-amino-acid polypeptide reads, in one-letter code: Ribose-5-phosphate isomerase A (219 aa).

Residues 28–31 (TGST), 81–84 (DGAD), and 94–97 (KGGG) contribute to the substrate site. The active-site Proton acceptor is Glu-103. Substrate is bound at residue Lys-121.

It belongs to the ribose 5-phosphate isomerase family. Homodimer.

It catalyses the reaction aldehydo-D-ribose 5-phosphate = D-ribulose 5-phosphate. It functions in the pathway carbohydrate degradation; pentose phosphate pathway; D-ribose 5-phosphate from D-ribulose 5-phosphate (non-oxidative stage): step 1/1. Catalyzes the reversible conversion of ribose-5-phosphate to ribulose 5-phosphate. In Salmonella choleraesuis (strain SC-B67), this protein is Ribose-5-phosphate isomerase A.